The sequence spans 506 residues: Maturase K (506 aa).

This sequence belongs to the intron maturase 2 family. MatK subfamily.

The protein resides in the plastid. It is found in the chloroplast. Its function is as follows. Usually encoded in the trnK tRNA gene intron. Probably assists in splicing its own and other chloroplast group II introns. The chain is Maturase K from Hydrangea macrophylla (Bigleaf hydrangea).